Here is a 78-residue protein sequence, read N- to C-terminus: Large ribosomal subunit protein bL31 (78 aa).

It belongs to the bacterial ribosomal protein bL31 family. Type A subfamily. Part of the 50S ribosomal subunit.

Binds the 23S rRNA. The sequence is that of Large ribosomal subunit protein bL31 (rpmE) from Rickettsia conorii (strain ATCC VR-613 / Malish 7).